The primary structure comprises 1445 residues: ABC-type transporter FGSG_00046 (1445 aa).

11 consecutive transmembrane segments (helical) span residues 21–41 (LFEECFLDILPWSLFLLMLLV), 77–97 (LILWASIAAFTTAGTVPAAAL), 119–138 (PSSLLGILTLLILLCDVTRV), 150–170 (ISILTTAALPINILLLVFESL), 187–207 (EIVGILNRSVFWWLNSLFILG), 255–277 (TLLRGGLCRLFTALFVTSQPLLL), 297–317 (YGLIGAYLVVYGGRAVFTALA), 368–388 (LQFVHEIWATPAEFGVAIFLL), 392–412 (VALGSLAPVIIIIVAIVGTVL), 481–501 (VFSTATATISPVLGFTIYVLM), and 520–540 (SLFSILSSSVYIFLTSVPAIF). Residues 259–541 (GGLCRLFTAL…FLTSVPAIFS (283 aa)) form the ABC transmembrane type-1 1 domain. Residues 595–821 (IRDGSVRWKG…DEIEASTYSR (227 aa)) form the ABC transporter 1 domain. 627-634 (GSVGSGKS) is a binding site for ATP. Residues 803–850 (RNTQKDMQDDEIEASTYSREQNGPKKQEEDANHESNQSPETSQEHELA) are disordered. Basic and acidic residues predominate over residues 824-835 (NGPKKQEEDANH). A run of 6 helical transmembrane segments spans residues 868 to 888 (GMGFFALSFSLSLVYSFWQNF), 912 to 932 (IGVYILCAVLALVTHTVVTWF), 1004 to 1024 (IPLTGVQALFAFTSALVQLVM), 1026 to 1046 (SIGTKWMAITFPFIIAILAII), 1116 to 1136 (LTLVLNLVIGAMAILMMGVTI), and 1147 to 1167 (IGLAFVNLTTFSQSIQSLLTW). Residues 974 to 1173 (HRAPMSYFES…LLTWWTMMEA (200 aa)) form the ABC transmembrane type-1 2 domain. The region spanning 1210–1441 (IELKELSASY…DVSLFQDLFS (232 aa)) is the ABC transporter 2 domain. 1244–1251 (GRTGSGKT) provides a ligand contact to ATP.

This sequence belongs to the ABC transporter superfamily. ABCC family.

The protein localises to the cell membrane. Functionally, ABC-type transporter; part of the gene cluster that mediates the biosynthesis of gramillins A and B, bicyclic lipopeptides that induce cell death in maize leaves but not in wheat leaves. May be involved in the secretion of gramillins. This chain is ABC-type transporter FGSG_00046, found in Gibberella zeae (strain ATCC MYA-4620 / CBS 123657 / FGSC 9075 / NRRL 31084 / PH-1) (Wheat head blight fungus).